The chain runs to 135 residues: Large ribosomal subunit protein uL16m (135 aa).

The protein belongs to the universal ribosomal protein uL16 family.

It is found in the mitochondrion. The chain is Large ribosomal subunit protein uL16m (RPL16) from Prototheca wickerhamii.